A 305-amino-acid chain; its full sequence is Ribosomal RNA small subunit methyltransferase H (305 aa).

S-adenosyl-L-methionine contacts are provided by residues 47 to 49, Asp-66, Phe-93, Asp-108, and Gln-115; that span reads GGH.

The protein belongs to the methyltransferase superfamily. RsmH family.

The protein localises to the cytoplasm. It carries out the reaction cytidine(1402) in 16S rRNA + S-adenosyl-L-methionine = N(4)-methylcytidine(1402) in 16S rRNA + S-adenosyl-L-homocysteine + H(+). Functionally, specifically methylates the N4 position of cytidine in position 1402 (C1402) of 16S rRNA. The sequence is that of Ribosomal RNA small subunit methyltransferase H from Prochlorococcus marinus (strain MIT 9211).